The sequence spans 472 residues: MAKCGSCGPGYKSPLDAMKGPREEIVYLPCIYRSTGINKPDYLATVDVDPKSPTYSQVIHRLPMPNVNDELHHSGWNTCSSCYGDSSKVRNKLILPCLISSRVYVVDVGTDPRAPRLHKTVEPHEVYWKCGLANLHTSHCLGCGEIMISALGDPCGNGKGGFVLLDGETFEVKGNWEAEGETAQFGYDFWYQPRHNVMISTEWGAPKAFALGFKMEDVLAGQYGHSLNVWDWTEHRLVQTIDLGKDGLIPLEIRFLHNPDADQGLVGCALSSSIFRFYKEKDGKWAAEKVIQVPSKKVEGWALPEMPGLITDILISLDDRFLYFSNWLHGDIRQYDITNIRNPKLVGQIFLGGSIQKGGPVAVQEDKELECQPDPVTVKGKIIPGGPQMIQLSLDGKRIYVTSSIYSIWDKQFYPDMLKEGAVMLQIDVDTEKGGLKLNPNFLVDFGKEPDGPVLAHELRYPGGDCSSDIWI.

It belongs to the selenium-binding protein family.

Its subcellular location is the nucleus. The protein localises to the cytoplasm. The protein resides in the cytosol. It is found in the membrane. The enzyme catalyses methanethiol + O2 + H2O = hydrogen sulfide + formaldehyde + H2O2 + H(+). It functions in the pathway organosulfur degradation. In terms of biological role, catalyzes the oxidation of methanethiol, an organosulfur compound known to be produced in substantial amounts by gut bacteria. Selenium-binding protein which may be involved in the sensing of reactive xenobiotics in the cytoplasm. May be involved in intra-Golgi protein transport. The protein is Methanethiol oxidase (selenbp1-b) of Xenopus laevis (African clawed frog).